A 451-amino-acid polypeptide reads, in one-letter code: POC1 centriolar protein homolog B (451 aa).

WD repeat units lie at residues 16-55, 58-99, 101-139, 142-181, 183-223, 226-265, and 268-307; these read GHKA…RAYR, GHKD…SEFK, HTAP…FLYS, RHTH…CVNN, SDSV…LLQH, VHSG…LIYT, and GHTG…LHCK. A Phosphoserine modification is found at S321. The segment at 372 to 394 is disordered; it reads PECSPTTTKKKTEDMSDLPSESQ. Residues 404-443 are a coiled coil; that stretch reads ALEHIMEQLNVLTQTVSILEQRLTLTEDKLKDCLENQQKL.

This sequence belongs to the WD repeat POC1 family. In terms of assembly, interacts with POC1A. Interacts with FAM161A. Interacts with CEP44; the interaction is direct and recruits POC1B to centriolar microtubules. Forms a microtubule-associated complex with POC5, CETN2 and FAM161A. Interacts with CCDC15. In terms of processing, phosphorylated in mitotic cells that may be mediated by CDK1.

The protein localises to the cytoplasm. It is found in the cytoskeleton. It localises to the microtubule organizing center. Its subcellular location is the centrosome. The protein resides in the centriole. The protein localises to the cilium basal body. It is found in the spindle pole. Plays an important role in centriole assembly and/or stability and ciliogenesis. Involved in early steps of centriole duplication, as well as in the later steps of centriole length control. Acts in concert with POC1A to ensure centriole integrity and proper mitotic spindle formation. Required for primary cilia formation, ciliary length and also cell proliferation. Required for retinal integrity. Acts as a positive regulator of centriole elongation. This chain is POC1 centriolar protein homolog B (POC1B), found in Pongo abelii (Sumatran orangutan).